A 230-amino-acid polypeptide reads, in one-letter code: Large ribosomal subunit protein uL1 (230 aa).

This sequence belongs to the universal ribosomal protein uL1 family. As to quaternary structure, part of the 50S ribosomal subunit.

Functionally, binds directly to 23S rRNA. The L1 stalk is quite mobile in the ribosome, and is involved in E site tRNA release. Protein L1 is also a translational repressor protein, it controls the translation of the L11 operon by binding to its mRNA. This chain is Large ribosomal subunit protein uL1, found in Gluconobacter oxydans (strain 621H) (Gluconobacter suboxydans).